A 236-amino-acid chain; its full sequence is MNTNKHVKTYMNSIVFDTAAVQAAAALQPIMETEAAQSAQVPHSSEAALQLMVETEAAQSVSAAPQEVANEILQDAGDTSARVITTTDALQVFSEAVQAIGEVIQETADGPHAIIEVKRAVFDATKMLAQLGTAVVKFYSPLFTAPERIVELVYSISLLVRIMKRIIKNDSLDKLTVDGLDSAATLLADVRSIIGDMFEVFVVNFRYAAPAEYFEAVDEMVHTVTDLALHVVKTVC.

The chain is OPEP-2 protein (OPEP-2) from Orgyia pseudotsugata (Douglas-fir tussock moth).